Consider the following 113-residue polypeptide: Large ribosomal subunit protein bL19m (113 aa).

The protein belongs to the bacterial ribosomal protein bL19 family.

It is found in the mitochondrion. In Reclinomonas americana, this protein is Large ribosomal subunit protein bL19m (RPL19).